The chain runs to 255 residues: EEF1A lysine methyltransferase 4 (255 aa).

Trp-26 and Tyr-30 together coordinate S-adenosyl-L-methionine. Tyr-39 is subject to Phosphotyrosine. Residues Trp-41, Gly-66, 88–89, 113–114, and Lys-130 contribute to the S-adenosyl-L-methionine site; these read DY and DV. A Required for methyltransferase activity motif is present at residues 129-134; sequence EKGTLD.

Belongs to the methyltransferase superfamily.

It catalyses the reaction L-lysyl-[protein] + S-adenosyl-L-methionine = N(6)-methyl-L-lysyl-[protein] + S-adenosyl-L-homocysteine + H(+). It carries out the reaction N(6)-methyl-L-lysyl-[protein] + S-adenosyl-L-methionine = N(6),N(6)-dimethyl-L-lysyl-[protein] + S-adenosyl-L-homocysteine + H(+). The enzyme catalyses N(6),N(6)-dimethyl-L-lysyl-[protein] + S-adenosyl-L-methionine = N(6),N(6),N(6)-trimethyl-L-lysyl-[protein] + S-adenosyl-L-homocysteine + H(+). Its function is as follows. Protein-lysine methyltransferase that efficiently catalyzes three successive methylations on 'Lys-36' in eukaryotic translation elongation factor 1 alpha (EEF1A1 or EEF1A2). The sequence is that of EEF1A lysine methyltransferase 4 from Bos taurus (Bovine).